A 1868-amino-acid polypeptide reads, in one-letter code: MILKYSLLGNLLLLWMNIVNSVVLVGLYYGFLTTFSIGPSYLLLLRTRVMKEGSEKEVSATTAFIMGQFIIFISTYYPPLHLALSRPHTLTVLVLPYLLLHFLFFWNNHKSLFDHRSTHGNFIPNLSIQYVFLNNLIFQLFNHFILPSSTLTRLVDISMFRCNNKILFVISSFFGWLIGHILLMKSIGLVLSWPWEKMRSNALFRSNKYLVSKWRNSVSQIFSILLFITCVCYLGRMPSPIITKKLKESSKGEEKKKTEKERDVEMETISKTKKIEQEEERSVEEDLSISLEGRWNPYKIYETEEIRLNGKEKDEFGFKEKEKNELLWVEKSLLSLLFDYQRWNRPLRYIENDRFSNAVRNEMSQYFFNTCASDGKQIISFTYPPSLSTFFEMIQKKMYFRTAEKLPAEDLSNEWVSTTEKQRDNLRNEFINRIEAIDKGSLILDVVEKRARLCNDEEEQECLPKFYDPLLNGPYRGTIKKGYLYSIRNDSITSIQGSTKISWINKIHGILSKDYREFEHEIYKLDVKSSSAGIDDSSVSIGEFTEEAEEAEESRTRFKQFAFWGEEKEINSENQAEFLFDMVRADPNDQKISNQSIKIEEMKKKVPRWLYKLTADFDFEEEEEEEEEEDDEEEPTDDHGIRSRKAKRVVIYTDTDTDEDTDTNIINTTDSDQAKNSDQAKNSDQAKKSDQAKNSDQAEEHEMALIRYSQQSDFRRDIIKGSMRAQRRKTVTWEMFQTDVHSPLFLDRIDKTPLFSFDISRMMNLIFRNWMEEKSLKLKRKTSDYAGEGAKEEEHEEEKREYKRKEDKRQEDERIAIAEAWDTIPFAQAVRSSLLVTHSILRKYIVLPSLIIVKNIGRMLLFQFPEWYEDFKEWSREMHVKCTYNGVQLSETEFPKDWLTDGIQIKILFPFSLKPWRRSKLRSHHRDLRKKQKNFCFLTVWGVETELPFGSPRKNPFFFEPIHKTLEKKIRKVKKKGFFILKILKDNIKGFLEIFKEKIRWVIKIVLFIKSKVIFFFRLTRVFDPIPNNKDSKISNRIIHESPIRIGSRDWANDSLTERKINDLADKTIKIRDQVEKIMKDKKKKITESQKYIWQISKKRSARLIPKWNSFMKSFIERIYMGILLCITNIYKINVKFFLDSTLDSTKKILNRYTYNDETKEKDTNETNPNIIPFISTIKSLSTYTTTISSNSHSPIYCDLSSLSQAYVFYKLLQTQVSNKYKSESIFQYYRTYPFIKDRIKDYFHNYFHTRGISDSESKHKKLRNSGMNEWKNWLRNHYQYNLSRAKWSGLAPLKWRNKVNQHRTIKNNDLQKLDSYEEKDQLIHSEIKDFYKLGLLKSPSHTKKMKKHYRYDLLSYKYINYEYVKDSNIYGSPLQVNRHGEILSLSNYNTHKYKSFYVITINDCLEDKYIIDTDQNLDRKYFELRIIYFYPRNDIETRTSTDIGTFTKKNKTTKTGTNKKDLYIRIHQEIQTKQKEFFFDWMGMNEQMLDRTISNLDPWFLPEFVPLYDRYRTNPWIIPIKLLLFDFNGNKKSDLYIDPKVKSNQKERSNPKAESNQKEYLELENRNRDEKERQHQGNLISDTRNQKKDVGANSTGSDIKKRRKKKKFKSKKEAELDLLLKKYFLFQLRWGDSFNQRMTNNIKVYCLLLRLMDPSEIAISSIERGEMGLDVMLIHKDLSLPELIKRGIFIIEPVRLSTKWDGISIMYQTIAISLTHKVQHQTNRGYQAKKHIDENYFNGSIACHGGVRVNGDNNNYDLLVPENILSPNHRREFRIISRFNYRNRNVVNKNPVFFNRAKTNAQGFEKFVDRDKHFDTDTNNSLKWKVFLWPTHRLEDLACMNRYWFDTNNGSRFSMSRIHMYQRFGIR.

The next 6 helical transmembrane spans lie at 11–31 (LLLL…YYGF), 64–84 (FIMG…HLAL), 87–107 (PHTL…FFWN), 126–146 (LSIQ…HFIL), 166–186 (ILFV…LMKS), and 221–241 (IFSI…PSPI). Residues 248 to 276 (ESSKGEEKKKTEKERDVEMETISKTKKIE) show a composition bias toward basic and acidic residues. Disordered stretches follow at residues 248–277 (ESSK…KIEQ), 617–643 (FDFE…GIRS), 658–700 (DEDT…QAEE), 782–806 (TSDY…KRKE), and 1537–1607 (YIDP…RKKK). Positions 617 to 636 (FDFEEEEEEEEEEDDEEEPT) are enriched in acidic residues. The span at 674 to 683 (AKNSDQAKNS) shows a compositional bias: polar residues. 3 stretches are compositionally biased toward basic and acidic residues: residues 684–700 (DQAK…QAEE), 789–806 (GAKE…KRKE), and 1537–1576 (YIDP…ERQH).

Belongs to the TIC214 family. Part of the Tic complex.

The protein localises to the plastid. Its subcellular location is the chloroplast inner membrane. In terms of biological role, involved in protein precursor import into chloroplasts. May be part of an intermediate translocation complex acting as a protein-conducting channel at the inner envelope. This Nuphar advena (Common spatterdock) protein is Protein TIC 214.